Reading from the N-terminus, the 483-residue chain is Serine protease HTRA4 (483 aa).

An N-terminal signal peptide occupies residues 1–30 (MSFQRLWAVRTQFLLLWLLLPAVPVPWAEA). The region spanning 35–113 (VSLPCPDACD…GAWLGTCGCA (79 aa)) is the IGFBP N-terminal domain. Cystine bridges form between C39–C65, C43–C67, C48–C68, C54–C71, C79–C93, and C87–C110. Positions 208-368 (GSGFIVSEDG…IPSDRIRQFL (161 aa)) are serine protease. Catalysis depends on charge relay system residues H224, D254, and S332. Residues 379 to 471 (KAPLQKKYLG…LSIIVLRGSQ (93 aa)) form the PDZ domain.

This sequence belongs to the peptidase S1C family.

Its subcellular location is the secreted. Its function is as follows. Serine protease. The protein is Serine protease HTRA4 (Htra4) of Mus musculus (Mouse).